We begin with the raw amino-acid sequence, 444 residues long: Phosphoglucosamine mutase (444 aa).

The active-site Phosphoserine intermediate is the Ser103. Mg(2+) contacts are provided by Ser103, Asp241, Asp243, and Asp245. At Ser103 the chain carries Phosphoserine.

The protein belongs to the phosphohexose mutase family. Requires Mg(2+) as cofactor. Post-translationally, activated by phosphorylation.

It catalyses the reaction alpha-D-glucosamine 1-phosphate = D-glucosamine 6-phosphate. In terms of biological role, catalyzes the conversion of glucosamine-6-phosphate to glucosamine-1-phosphate. In Deinococcus radiodurans (strain ATCC 13939 / DSM 20539 / JCM 16871 / CCUG 27074 / LMG 4051 / NBRC 15346 / NCIMB 9279 / VKM B-1422 / R1), this protein is Phosphoglucosamine mutase.